We begin with the raw amino-acid sequence, 232 residues long: Sugar fermentation stimulation protein homolog (232 aa).

It belongs to the SfsA family.

In Brucella anthropi (strain ATCC 49188 / DSM 6882 / CCUG 24695 / JCM 21032 / LMG 3331 / NBRC 15819 / NCTC 12168 / Alc 37) (Ochrobactrum anthropi), this protein is Sugar fermentation stimulation protein homolog.